The following is a 447-amino-acid chain: C4-dicarboxylate transport protein (447 aa).

A run of 8 helical transmembrane segments spans residues 19 to 39, 55 to 75, 90 to 110, 155 to 175, 199 to 219, 232 to 252, 343 to 363, and 366 to 386; these read ILYV…HFYP, LVKM…IAGL, IYFL…ANVV, AFAS…GIAL, LVAI…AFTI, MLVG…LGLV, LLLV…AGFI, and AATL…ILGV.

Belongs to the dicarboxylate/amino acid:cation symporter (DAACS) (TC 2.A.23) family.

Its subcellular location is the cell inner membrane. Functionally, responsible for the transport of dicarboxylates such as succinate, fumarate, and malate from the periplasm across the membrane. This Rhodospirillum rubrum (strain ATCC 11170 / ATH 1.1.1 / DSM 467 / LMG 4362 / NCIMB 8255 / S1) protein is C4-dicarboxylate transport protein.